The sequence spans 1527 residues: Lysophospholipase nte1 (1527 aa).

The Cytoplasmic portion of the chain corresponds to 1–73; it reads MADSGASVPS…SPPTPTTMVG (73 aa). Residues 74-94 traverse the membrane as a helical segment; sequence WIGWVFSLVFQTIPSVLYWVI. Residues 95 to 116 are Lumenal-facing; the sequence is TFSTITLPTWLFTLFSMSLTFT. A helical transmembrane segment spans residues 117–137; sequence MNFTTLLLIVLGLVSTVSWFI. At 138–1527 the chain is on the cytoplasmic side; it reads RYRFLNMYSR…RTLAPRRASI (1390 aa). The segment covering 299 to 310 has biased composition (low complexity); it reads GSSSSMSSVQPS. Disordered regions lie at residues 299–387, 567–596, and 765–785; these read GSSS…RRKS, DQFA…QRKD, and ATSR…KKPS. Polar residues predominate over residues 364–377; that stretch reads RASSYHPNGQSTAS. A nucleoside 3',5'-cyclic phosphate is bound by residues 682-809 and 846-966; these read GGTS…SYRS and RLTG…IAQR. The PNPLA domain occupies 1224-1388; it reads LVLGGGGARG…IDNLTVAHMK (165 aa). Residues 1228–1233 carry the GXGXXG motif; that stretch reads GGGARG. The GXSXG motif lies at 1255-1259; sequence GTSIG. Ser1257 serves as the catalytic Nucleophile. Residue Asp1375 is the Proton acceptor of the active site. A DGA/G motif is present at residues 1375–1377; the sequence is DGG. The segment at 1504–1527 is disordered; the sequence is LPLPEENEEKKKLQRTLAPRRASI.

Belongs to the NTE family.

The protein resides in the endoplasmic reticulum membrane. It carries out the reaction a 1-acyl-sn-glycero-3-phosphocholine + H2O = sn-glycerol 3-phosphocholine + a fatty acid + H(+). Inhibited by organophosphorus esters. Intracellular phospholipase B that catalyzes the double deacylation of phosphatidylcholine (PC) to glycerophosphocholine (GroPCho). Plays an important role in membrane lipid homeostasis. Responsible for the rapid PC turnover in response to inositol, elevated temperatures, or when choline is present in the growth medium. The polypeptide is Lysophospholipase nte1 (nte1) (Emericella nidulans (strain FGSC A4 / ATCC 38163 / CBS 112.46 / NRRL 194 / M139) (Aspergillus nidulans)).